A 174-amino-acid polypeptide reads, in one-letter code: Co-chaperone protein HscB homolog (174 aa).

The region spanning 2–74 (NYFDLFNVVP…LRRAEHMLSL (73 aa)) is the J domain.

The protein belongs to the HscB family. In terms of assembly, interacts with HscA and stimulates its ATPase activity.

Co-chaperone involved in the maturation of iron-sulfur cluster-containing proteins. Seems to help targeting proteins to be folded toward HscA. This is Co-chaperone protein HscB homolog from Shewanella frigidimarina (strain NCIMB 400).